Consider the following 182-residue polypeptide: Vacuolar protein sorting-associated protein 29 (182 aa).

It belongs to the VPS29 family. As to quaternary structure, component of the commander complex consisting of the CCC subcomplex and the retriever subcomplex. Component of the heterotrimeric retriever complex formed by vps26c, vps29 and vps35l; within the complex interacts with vps35l. Component of the heterotrimeric retromer cargo-selective complex (CSC), also described as vacuolar protein sorting subcomplex (VPS), formed by vps26 (vps26a or vps26b), vps29 and vps35. The CSC has a highly elongated structure with vps26 and vps29 binding independently at opposite distal ends of vps35 as central platform.

It is found in the cytoplasm. Its subcellular location is the membrane. It localises to the endosome membrane. Its function is as follows. Component of the commander complex that is essential for endosomal recycling of transmembrane cargos; the commander complex is composed of the CCC subcomplex and the retriever subcomplex. Component of the retriever complex, which is a heterotrimeric complex related to retromer cargo-selective complex (CSC) and essential for retromer-independent retrieval and recycling of numerous cargos. Component of the retromer cargo-selective complex (CSC). The CSC is believed to be the core functional component of retromer or respective retromer complex variants acting to prevent missorting of selected transmembrane cargo proteins into the lysosomal degradation pathway. In the endosomes, retriever complex drives the retrieval and recycling of NxxY-motif-containing cargo proteins by coupling to snx17, a cargo essential for the homeostatic maintenance of numerous cell surface proteins associated with processes that include cell migration, cell adhesion, nutrient supply and cell signaling. The recruitment of the retriever complex to the endosomal membrane involves CCC and WASH complexes. The protein is Vacuolar protein sorting-associated protein 29 (vps29) of Danio rerio (Zebrafish).